The chain runs to 191 residues: Protein RER1 homolog (191 aa).

3 helical membrane-spanning segments follow: residues 35 to 55 (AFRW…IILL), 57 to 77 (GFYI…LLFL), and 135 to 155 (FFDV…LTFL).

It belongs to the RER1 family.

The protein resides in the membrane. Its function is as follows. May be involved in protein transport along the secretory pathway. This Caenorhabditis elegans protein is Protein RER1 homolog (rer-1).